The sequence spans 538 residues: Growth factor receptor-bound protein 14 (538 aa).

Residues 1–73 (MTTSLQDGQS…KAKDLEVQET (73 aa)) are disordered. N-acetylthreonine is present on Thr2. A compositionally biased stretch (basic and acidic residues) spans 54 to 69 (ATRRGAMDRRKAKDLE). The region spanning 104-190 (KKQVIKVYSE…NKLYLRKNYA (87 aa)) is the Ras-associating domain. Residues 232 to 340 (YPEIHGFLHA…WVTAIRLLKY (109 aa)) enclose the PH domain. Phosphoserine is present on residues Ser370 and Ser373. In terms of domain architecture, SH2 spans 437-533 (WFHHRISRDE…VLPCKLKHYC (97 aa)).

The protein belongs to the GRB7/10/14 family. In terms of assembly, interacts with the cytoplasmic domain of the autophosphorylated insulin receptor, through the SH2 domain. Interacts with GRB14 (via BPS domain); this interaction protects the tyrosines in the activation loop on INSR from dephosphorylation. Binds to the ankyrin repeat region of TNKS2 via its N-terminus. Interacts with activated NRAS. Interacts (via SH2 domain) with TEK/TIE2 (tyrosine phosphorylated). In terms of processing, phosphorylated on serine residues. Phosphorylated on tyrosine residues by TEK/TIE2.

Its subcellular location is the cytoplasm. It is found in the endosome membrane. In terms of biological role, adapter protein which modulates coupling of cell surface receptor kinases with specific signaling pathways. Binds to, and suppresses signals from, the activated insulin receptor (INSR). Potent inhibitor of insulin-stimulated MAPK3 phosphorylation. Plays a critical role regulating PDPK1 membrane translocation in response to insulin stimulation and serves as an adapter protein to recruit PDPK1 to activated insulin receptor, thus promoting PKB/AKT1 phosphorylation and transduction of the insulin signal. This is Growth factor receptor-bound protein 14 (Grb14) from Rattus norvegicus (Rat).